Consider the following 417-residue polypeptide: Delta-aminolevulinic acid dehydratase, chloroplastic (417 aa).

Residues 1–40 (MAALLVPGGGAAPGLVWRRRRAAVQCAAASPSSPDPSWRT) constitute a chloroplast transit peptide. The disordered stretch occupies residues 63-92 (VVSGNPPAAPAAPAKAKAPPGTPVVKPLRL). The active-site Schiff-base intermediate with substrate is the lysine 286. Positions 296 and 308 each coordinate 5-aminolevulinate. Glutamate 324 lines the Mg(2+) pocket. Lysine 339 serves as the catalytic Schiff-base intermediate with substrate. Residues serine 365 and tyrosine 404 each coordinate 5-aminolevulinate.

Belongs to the ALAD family. In terms of assembly, homooctamer. It depends on Mg(2+) as a cofactor.

The protein resides in the plastid. Its subcellular location is the chloroplast. The catalysed reaction is 2 5-aminolevulinate = porphobilinogen + 2 H2O + H(+). It functions in the pathway porphyrin-containing compound metabolism; protoporphyrin-IX biosynthesis; coproporphyrinogen-III from 5-aminolevulinate: step 1/4. Its function is as follows. Catalyzes an early step in the biosynthesis of tetrapyrroles. Binds two molecules of 5-aminolevulinate per subunit, each at a distinct site, and catalyzes their condensation to form porphobilinogen. This is Delta-aminolevulinic acid dehydratase, chloroplastic (HEMB) from Selaginella martensii (Martens's spike moss).